The sequence spans 307 residues: D-alanine--D-alanine ligase (307 aa).

Positions 104–301 (RTAFLAAGLP…FVSLCRWMVE (198 aa)) constitute an ATP-grasp domain. 130–183 (PLPRPFVIKPANEGSAVGVHILHEGDNRRTEIARSWSFGGQALVEEYIPGRELT) is an ATP binding site. Residues Asp251, Glu268, and Asn270 each contribute to the Mg(2+) site.

It belongs to the D-alanine--D-alanine ligase family. The cofactor is Mg(2+). Requires Mn(2+) as cofactor.

The protein resides in the cytoplasm. The catalysed reaction is 2 D-alanine + ATP = D-alanyl-D-alanine + ADP + phosphate + H(+). It participates in cell wall biogenesis; peptidoglycan biosynthesis. Its function is as follows. Cell wall formation. The chain is D-alanine--D-alanine ligase from Granulibacter bethesdensis (strain ATCC BAA-1260 / CGDNIH1).